The sequence spans 417 residues: Probable pectate lyase 20 (417 aa).

The signal sequence occupies residues 1–25 (MAVTQILVVFASALLLSMFFTGVDS). N-linked (GlcNAc...) asparagine glycosylation is found at N29 and N53. Residues D215, D239, and D243 each contribute to the Ca(2+) site. R295 is an active-site residue.

The protein belongs to the polysaccharide lyase 1 family. Ca(2+) is required as a cofactor.

It catalyses the reaction Eliminative cleavage of (1-&gt;4)-alpha-D-galacturonan to give oligosaccharides with 4-deoxy-alpha-D-galact-4-enuronosyl groups at their non-reducing ends.. It functions in the pathway glycan metabolism; pectin degradation; 2-dehydro-3-deoxy-D-gluconate from pectin: step 2/5. The chain is Probable pectate lyase 20 from Arabidopsis thaliana (Mouse-ear cress).